The chain runs to 790 residues: Vacuolar protein sorting-associated protein 35B (790 aa).

It belongs to the VPS35 family. In terms of assembly, component of the retromer complex which consists of VPS29 (MAG1), VPS26 (VPS26A or VPS26B), VPS35 (VPS35A or VPS35B or VPS35C), VPS5/17 (SNX1 or SNX2A or SNX2B). Component of a retromer subcomplex consisting of VPS29 (MAG1), VPS26 (VPS26A or VPS26B), VPS35 (VPS35A or VPS35B or VPS35C). In terms of tissue distribution, expressed in siliques and maturing seeds (at protein level).

The protein resides in the cytoplasm. Its subcellular location is the endosome membrane. The protein localises to the prevacuolar compartment membrane. It is found in the golgi apparatus. It localises to the trans-Golgi network membrane. In terms of biological role, plays a role in vesicular protein sorting. Component of the membrane-associated retromer complex which is essential in endosome-to-Golgi retrograde transport. Also involved in the efficient sorting of seed storage proteins globulin 12S and albumin 2S. The VPS29-VPS26-VPS35 subcomplex may be involved in recycling of specific cargos from endosome to the plasma membrane. This is Vacuolar protein sorting-associated protein 35B (VPS35B) from Arabidopsis thaliana (Mouse-ear cress).